The primary structure comprises 271 residues: 4-hydroxy-tetrahydrodipicolinate reductase (271 aa).

Residues 11 to 16 (GGSGRM) and E37 contribute to the NAD(+) site. Residue R38 coordinates NADP(+). NAD(+)-binding positions include 101–103 (GTT) and 125–128 (APNM). The active-site Proton donor/acceptor is the H158. H159 contributes to the (S)-2,3,4,5-tetrahydrodipicolinate binding site. K162 serves as the catalytic Proton donor. 168 to 169 (GT) is a (S)-2,3,4,5-tetrahydrodipicolinate binding site.

The protein belongs to the DapB family.

It localises to the cytoplasm. The catalysed reaction is (S)-2,3,4,5-tetrahydrodipicolinate + NAD(+) + H2O = (2S,4S)-4-hydroxy-2,3,4,5-tetrahydrodipicolinate + NADH + H(+). It carries out the reaction (S)-2,3,4,5-tetrahydrodipicolinate + NADP(+) + H2O = (2S,4S)-4-hydroxy-2,3,4,5-tetrahydrodipicolinate + NADPH + H(+). The protein operates within amino-acid biosynthesis; L-lysine biosynthesis via DAP pathway; (S)-tetrahydrodipicolinate from L-aspartate: step 4/4. Catalyzes the conversion of 4-hydroxy-tetrahydrodipicolinate (HTPA) to tetrahydrodipicolinate. The polypeptide is 4-hydroxy-tetrahydrodipicolinate reductase (Shewanella loihica (strain ATCC BAA-1088 / PV-4)).